Consider the following 120-residue polypeptide: Large ribosomal subunit protein uL14 (120 aa).

Belongs to the universal ribosomal protein uL14 family. In terms of assembly, part of the 50S ribosomal subunit. Forms a cluster with proteins L3 and L19. In the 70S ribosome, L14 and L19 interact and together make contacts with the 16S rRNA in bridges B5 and B8.

Its function is as follows. Binds to 23S rRNA. Forms part of two intersubunit bridges in the 70S ribosome. This is Large ribosomal subunit protein uL14 from Dictyoglomus thermophilum (strain ATCC 35947 / DSM 3960 / H-6-12).